A 642-amino-acid polypeptide reads, in one-letter code: Tigger transposable element derived 5 (642 aa).

Positions 1–54 are disordered; that stretch reads MYPASPSAGPALHPVPHRARLPRPRCLAEPPRSPAPGPGSTARPPPPAPGPRPR. Over residues 31–52 the composition is skewed to pro residues; it reads PRSPAPGPGSTARPPPPAPGPR. Residues 56-107 enclose the HTH psq-type domain; sequence AVKMTFRKAYSIKDKLQAIERVKGGERQASVCRDFGVPGGTLRGWLKDEPKL. 2 consecutive DNA-binding regions (H-T-H motif) follow at residues 83 to 103 and 154 to 187; these read QASVCRDFGVPGGTLRGWLKD and PVIQAQAEAFARQIYGPECTFKASHGWFWRWQKR. The region spanning 121-194 is the HTH CENPB-type domain; that stretch reads QRKKMRLANE…QKRHGISSQR (74 aa). A compositionally biased stretch (low complexity) spans 198–208; the sequence is EAEPPVAGPAP. The tract at residues 198–230 is disordered; the sequence is EAEPPVAGPAPVKEEPAQPSSAGLLLDGTPATL. In terms of domain architecture, DDE-1 spans 239-364; sequence DEQIYNANVT…CLQQKAVLLV (126 aa). A disordered region spans residues 543–583; that stretch reads GLPEGCGEEVAPAAPPSPASLPSSIGAGEEEEEEATEQGGV.

It belongs to the tigger transposable element derived protein family.

The protein resides in the nucleus. In Rattus norvegicus (Rat), this protein is Tigger transposable element derived 5 (Tigd5).